Reading from the N-terminus, the 1178-residue chain is Ubiquitin carboxyl-terminal hydrolase cyk-3 (1178 aa).

EF-hand domains are found at residues 28–60 (EEYR…GAQI), 175–210 (FPDS…LCRG), and 211–246 (PLPG…LNVP). Ca(2+) contacts are provided by D188, N190, D192, Q194, E199, D224, D226, D228, and E235. Residues 296–410 (ESRKMELQIV…VDSQFTRKYL (115 aa)) enclose the DUSP domain. One can recognise a USP domain in the interval 570–1175 (VGLVNYGNFC…GAYLLFYERK (606 aa)). C579 (nucleophile) is an active-site residue. Residues 681–725 (SNKSLHPSPEESEGTDSNKLSDSSKKKEADKEEADEEKAERSWTE) are disordered. The Proton acceptor role is filled by H1134.

It belongs to the peptidase C19 family. As to expression, expressed in excretory cells, coelomocytes, head neurons, hypodermal cells, germ cells, oocytes, sperm and pharynx (at protein level).

It localises to the nucleus. Its subcellular location is the cytoplasm. The protein localises to the cytoskeleton. The protein resides in the microtubule organizing center. The catalysed reaction is Thiol-dependent hydrolysis of ester, thioester, amide, peptide and isopeptide bonds formed by the C-terminal Gly of ubiquitin (a 76-residue protein attached to proteins as an intracellular targeting signal).. Its function is as follows. Ubiquitin-protein hydrolase which cleaves ubiquitin from ubiquitinated proteins. Plays a role in embryo osmoregulation. Probably by regulating osmosis, controls actin redistribution in the 1-cell embryos and thus actin-dependent processes such as cytokinesis and P-granules segregation. During the first embryonic mitotic division, involved in the formation of a functional microtubule organizing center provided by the male pronucleus. Acts as a positive regulator of the mTORC1 signaling. This chain is Ubiquitin carboxyl-terminal hydrolase cyk-3, found in Caenorhabditis elegans.